The primary structure comprises 182 residues: UPF0316 protein BCAH820_3389 (182 aa).

Helical transmembrane passes span L6–V26, S32–F52, and W58–I78.

Belongs to the UPF0316 family.

The protein localises to the cell membrane. The protein is UPF0316 protein BCAH820_3389 of Bacillus cereus (strain AH820).